The primary structure comprises 330 residues: Flotillin-like protein FloA (330 aa).

Transmembrane regions (helical) follow at residues 6 to 26 (LLLF…FTFV) and 28 to 48 (VMLW…TLVG).

Belongs to the flotillin-like FloA family. Homooligomerizes.

It localises to the cell membrane. Its subcellular location is the membrane raft. Found in functional membrane microdomains (FMM) that may be equivalent to eukaryotic membrane rafts. FMMs are highly dynamic and increase in number as cells age. Flotillins are thought to be important factors in membrane fluidity. This is Flotillin-like protein FloA from Bacillus pumilus (strain SAFR-032).